The primary structure comprises 103 residues: MGNIFSPTHLIVILLIVLVLFGRGKVSELMGDVAKGIKAFKKNMKEEGELLEDKLEMSDYSKTTDVRPQQSQPLSVKRAAERRKGSSSFKEGKASVAKKQRGK.

Residues 1–21 (MGNIFSPTHLIVILLIVLVLF) form a helical membrane-spanning segment. The tract at residues 60–103 (YSKTTDVRPQQSQPLSVKRAAERRKGSSSFKEGKASVAKKQRGK) is disordered.

This sequence belongs to the TatA/E family. The Tat system comprises two distinct complexes: a TatABC complex, containing multiple copies of TatA, TatB and TatC subunits, and a separate TatA complex, containing only TatA subunits. Substrates initially bind to the TatABC complex, which probably triggers association of the separate TatA complex to form the active translocon.

It localises to the cell inner membrane. Its function is as follows. Part of the twin-arginine translocation (Tat) system that transports large folded proteins containing a characteristic twin-arginine motif in their signal peptide across membranes. TatA could form the protein-conducting channel of the Tat system. This Bartonella quintana (strain Toulouse) (Rochalimaea quintana) protein is Sec-independent protein translocase protein TatA.